The sequence spans 440 residues: Asparagine--tRNA ligase (440 aa).

Belongs to the class-II aminoacyl-tRNA synthetase family. As to quaternary structure, homodimer.

It is found in the cytoplasm. It catalyses the reaction tRNA(Asn) + L-asparagine + ATP = L-asparaginyl-tRNA(Asn) + AMP + diphosphate + H(+). In Roseiflexus castenholzii (strain DSM 13941 / HLO8), this protein is Asparagine--tRNA ligase.